Here is a 2325-residue protein sequence, read N- to C-terminus: MTSNQSISTTELLQFLTDIETNIDDHETDFRKLLLYLLRFTNEKLIVIAQEENKTPTELQLLSKLIDTIELVLSKKTPLLSTLLTIEDVNIIHTTGSGSLVYEVPLHEWCISFALSHIPNFVSHTAGLNQLKRLVFLIVNLVSTQLHSFKVIKSTRIHLLKTLDDNLNFCLQNLLSANTFLFKSKLTTAVNLFSIVHDYDISQKLSLNLNNYQLKFESCSRKIWFILNEISLVSELDNLNLLDCLKSVFILDQSSALVLNVSVGWNQIGFLLSCIVEYLQQDFRTLDSNTNNFEFVNLNRSISLSLLNVYIVCFDKDLLENFMSFSNIKGILSKLIYDDSIPSVIRKTLNIVQYTYQLMSNPDGDDIKLYSTSVYNDYVWTPFVDSELESLRARLLDLQGNHEDSRKEELLSFSIDETHKLAKSTNSLNYTDEKAWIRTVKKLIGIDKNVLEDETTLYTLVTALSHYPCILKGDYDYTINECTKCGFGPLTKNNYSSIDPNRFPLNYSTEATTLQDIIQQFLIPKLETQQDPLLCCNTLLLIFNFYASFSPMADMQDHNILDFLLRLLATNDNRDVRMLVARILPLYLIQSKDDKLLDETFKYIFQKVTSIDFSSQHRLHFGESTIRAVVELATVSTGERLCAIYFKLVDWLGEQNEQHSNYVYCGILNLASAKSLPPHKLLSPYLPSVAEIIIKKPQVFERIIKVSMVTKNYFLNRTKEYTVPRILEYYKDPTLLTQIANAAGLEVGKLLANCLPRILATYLTKESVNERYIMKVLSSVCPDYKMIHTEELFTRIGDITWYILLEIQMDEFGNIRNLANITRALECVCKNVSLRKNGSELTKNNSINDLIEDQVLLLVQKFSDVTHSSRGAKPYLELKNSFYAIEFLIKGHIDAITSALGQLSTCLQATLEEPNFHVLSLRCWNELIKKVPPSHLISLIDIIISIILQKFESFGSEAKSIAIEILRKIYEEIKDKYNRYSLYFLSLPFLSYMEDYQMVKEFRNMKSPSRAMIFSEFTRRLQTSNMYVVKHALFDLSNYFEKYQINCQKDLFKDPGLTPAITSLVRTILDTAAKFKNKDTTVSTACAKALAIIGALDSNKFQFKTVKSLIIISSDFEDIEENSTFLVDLIENHLLKIFWASNDPHKQLFAAYVMQSFLAVMGLDERVLNTKDNRVWNKFTDVAKSTLTPFLKSKYAAPKPKLDNLKFPFFKLGMKYETWLVDVTLFLLKRASIDNGKGNQKAKTRKLIFQSYAVLIQREHDIPLCEHLLRYVALSHVINEGVPEDLHKEFLHILKMDSKSTSPDRAEQLKLCYQTIFSVLDYFNQWVSNMRVVTSNSGSELTSSDIRHKMDAVAKFSSFPQDLLTTRSAECDAYERTIMYLENCYRDSQSEKSFKLSNLNGAATLQDMYAHIDDYDALNGTLKMFSTNNLNEKLTTFQYSDSWSLAHESFEALGSTKNSVSNNTKLLQSLNEHGLYNEVLSTLSARTDSNDLKSIPLDWSLMGLHAAVYKGDSKQLEKWLQVINSIGKPHDMETMINYELAKALSFLFQSRIDMFKGSMDKLYNIIGCSLVPSVSSNFTRNITLMNQLHAIYDVSLIVLSKDSEDTLDLRIGNVDQDFDTQRNILTLHNVANTVMKNPAMISKNLLRESSLARKYNRLDISTRSIVQAMSLEDDQANIEFAELQWAQGKQSEAIKCLFDILKDNKFHDDKSKAKVQLQYANWLDESNHLSAHQIITEYNKAFHLNMVDEKCNFDIGKYYNKLMESSNDESGEYEHLTVRNYIRAVSVGTTYIFEALPKVLTIWLDFADKSNKSNAAENRLKQIIDDLYNAIANVPNYSWYTVLTQILSRIVHEHEPSFKVLKRIVQNVTLEYPKHCVWYIFSHARSSDKVRKRRVRELLNQVCTQDGNDTLPKSTMAAGNLFAKLIKIAELKIPKTNRKRQMSLLQDFEVDLSEPIDDLVIPIQSNLQIQIPSHLNSKHKGFSRSSSISFDGFDDNVNIFFSLQMPRQLTVRGSDGNAYRLMVKSDDTRKDAKVVEFTTMVNRILSTSTEARKRGLQIANYSVVPLSDHFGIIEFVMNVQTMKGVISEQRKRQGIPINERKVFMHIDSLQKAKKKDSKQLDKLVAGFRAIMDRCPPVLHTWFVEQFSDPSAWYMARNAFTRSSAVMSMVGYIMGLGDRHCENILIFKNTGAVLHIDFDCLFEKGTTLPTPEIVPFRLTQNMVDAMGITGVDGIYRITCEVTGTLLRENEQILMNILETLIYDPLIDWRNHNPREDLSKVRKKIRGLINEDEGLPMNIHGQVDVLIQEATSLERLSQMYAGWAAYM.

The FAT domain occupies 1363-1886; sequence LLTTRSAECD…VWYIFSHARS (524 aa). A PI3K/PI4K catalytic domain is found at 1993–2309; that stretch reads FDDNVNIFFS…QVDVLIQEAT (317 aa). The G-loop stretch occupies residues 1999–2005; sequence IFFSLQM. The segment at 2174–2182 is catalytic loop; sequence GLGDRHCEN. The interval 2194-2218 is activation loop; sequence HIDFDCLFEKGTTLPTPEIVPFRLT. Residues 2293-2325 enclose the FATC domain; that stretch reads LPMNIHGQVDVLIQEATSLERLSQMYAGWAAYM.

It belongs to the PI3/PI4-kinase family. ATM subfamily.

Its subcellular location is the nucleus. It carries out the reaction L-seryl-[protein] + ATP = O-phospho-L-seryl-[protein] + ADP + H(+). The catalysed reaction is L-threonyl-[protein] + ATP = O-phospho-L-threonyl-[protein] + ADP + H(+). In terms of biological role, serine/threonine protein kinase which activates checkpoint signaling upon genotoxic stresses such as ionizing radiation (IR), ultraviolet light (UV), or DNA replication stalling, thereby acting as a DNA damage sensor. Recognizes the substrate consensus sequence [ST]-Q. Recruited to DNA lesions in order to initiate the DNA repair by homologous recombination. Phosphorylates histone H2A to form H2AS128ph (gamma-H2A) at sites of DNA damage, also involved in the regulation of DNA damage response mechanism. Required for cell growth and meiotic recombination. This is Serine/threonine-protein kinase MEC1 (MEC1) from Candida albicans (strain SC5314 / ATCC MYA-2876) (Yeast).